We begin with the raw amino-acid sequence, 421 residues long: MSQLIDRRQNAGKKSTVNRQRFLRRYKSQIKKAVSEAVGKRSITEIDQGEQITIPAKDIYEPQFHRGHGGHIERVLPGNDNFIAGDRIKRPSGGGAGGAGGNASDSGEGEDNFVFELSREEFLELYFEDLELPDLVKKELARISTYKTVRAGVTTSGIPNNINVLRSMKQATGRRVALASPYKRRLKEAEEELERLKQLANPDKIDLLKLERDIEFFKKKIQTVPFIDTIDLRYNHRVRVPSPSTQAVMFCVMDVSGSMDEAKKDIAKRFFILLYMFLTKNYEKIELVFIRHHTSAKEVNEEEFFYSRETGGTVVSSALELLNTIIEARYPPQAWNIYVAQASDGDNWNADSPYCQELLQEKIMPLLQYFAYIEIMPRHHQSLWEVYQQVKERYPNFAMENIDNVADIYPVFRELFKRKTV.

Positions 83–110 (IAGDRIKRPSGGGAGGAGGNASDSGEGE) are disordered. Residues 92–101 (SGGGAGGAGG) are compositionally biased toward gly residues.

The protein belongs to the UPF0229 family.

This Legionella pneumophila (strain Paris) protein is UPF0229 protein lpp2857.